The following is a 352-amino-acid chain: Quinolinate synthase (352 aa).

Iminosuccinate is bound by residues His-55 and Ser-72. Residue Cys-117 participates in [4Fe-4S] cluster binding. Iminosuccinate-binding positions include 143 to 145 (YVN) and Ser-160. Cys-204 contributes to the [4Fe-4S] cluster binding site. Iminosuccinate is bound by residues 230–232 (HPE) and Thr-258. Residue Cys-303 participates in [4Fe-4S] cluster binding.

It belongs to the quinolinate synthase family. Type 2 subfamily. [4Fe-4S] cluster is required as a cofactor.

Its subcellular location is the cytoplasm. It carries out the reaction iminosuccinate + dihydroxyacetone phosphate = quinolinate + phosphate + 2 H2O + H(+). Its pathway is cofactor biosynthesis; NAD(+) biosynthesis; quinolinate from iminoaspartate: step 1/1. Its function is as follows. Catalyzes the condensation of iminoaspartate with dihydroxyacetone phosphate to form quinolinate. In Mycobacterium leprae (strain Br4923), this protein is Quinolinate synthase.